The primary structure comprises 273 residues: Putative phosphoenolpyruvate synthase regulatory protein (273 aa).

153-160 lines the ADP pocket; sequence GVSRCGKT.

The protein belongs to the pyruvate, phosphate/water dikinase regulatory protein family. PSRP subfamily.

It catalyses the reaction [pyruvate, water dikinase] + ADP = [pyruvate, water dikinase]-phosphate + AMP + H(+). The catalysed reaction is [pyruvate, water dikinase]-phosphate + phosphate + H(+) = [pyruvate, water dikinase] + diphosphate. In terms of biological role, bifunctional serine/threonine kinase and phosphorylase involved in the regulation of the phosphoenolpyruvate synthase (PEPS) by catalyzing its phosphorylation/dephosphorylation. The sequence is that of Putative phosphoenolpyruvate synthase regulatory protein from Pectobacterium atrosepticum (strain SCRI 1043 / ATCC BAA-672) (Erwinia carotovora subsp. atroseptica).